A 397-amino-acid chain; its full sequence is DNA-directed RNA polymerase subunit Rpo1C (397 aa).

It belongs to the RNA polymerase beta' chain family. Part of the RNA polymerase complex.

The protein localises to the cytoplasm. The enzyme catalyses RNA(n) + a ribonucleoside 5'-triphosphate = RNA(n+1) + diphosphate. DNA-dependent RNA polymerase (RNAP) catalyzes the transcription of DNA into RNA using the four ribonucleoside triphosphates as substrates. Forms part of the jaw domain. This is DNA-directed RNA polymerase subunit Rpo1C from Halobacterium salinarum (strain ATCC 29341 / DSM 671 / R1).